Reading from the N-terminus, the 215-residue chain is tRNA (guanine-N(7)-)-methyltransferase (215 aa).

Residues Glu44, Glu69, Asp96, and Asp118 each contribute to the S-adenosyl-L-methionine site. Residue Asp118 is part of the active site. Substrate contacts are provided by residues Lys122, Asp154, and 191–194; that span reads TEYE.

This sequence belongs to the class I-like SAM-binding methyltransferase superfamily. TrmB family.

It carries out the reaction guanosine(46) in tRNA + S-adenosyl-L-methionine = N(7)-methylguanosine(46) in tRNA + S-adenosyl-L-homocysteine. The protein operates within tRNA modification; N(7)-methylguanine-tRNA biosynthesis. In terms of biological role, catalyzes the formation of N(7)-methylguanine at position 46 (m7G46) in tRNA. The protein is tRNA (guanine-N(7)-)-methyltransferase of Exiguobacterium sp. (strain ATCC BAA-1283 / AT1b).